The following is a 268-amino-acid chain: MASFGWKRKVGERVSKQTVQQFEQDSEQADEDEVEREGVDWLHVIKRKREVLLEDCAAKSKRLKEEGALLAEQDRNWEALKKWDEAVQLTPEDAVLYEMKSQVLITLGEVFLAVQSAEMATRLRPIWWEAWQTLGRAQLSLGEVELAVRSFQVALHLHPSERPLWEEDLNWALKLRENQQSLREKASQVDEARRLLVEAPELKGDYDFESDEVIEACSAMADRQKQYEDLKKKAVVVDAHGEAKEMLVEGDDNPTSSSQSVLIKARGL.

Positions 14–34 are disordered; it reads VSKQTVQQFEQDSEQADEDEV. A compositionally biased stretch (acidic residues) spans 24 to 34; it reads QDSEQADEDEV. TPR repeat units follow at residues 60-93, 94-127, and 128-161; these read SKRLKEEGALLAEQDRNWEALKKWDEAVQLTPED, AVLYEMKSQVLITLGEVFLAVQSAEMATRLRPIW, and WEAWQTLGRAQLSLGEVELAVRSFQVALHLHPSE. A disordered region spans residues 249 to 268; sequence EGDDNPTSSSQSVLIKARGL.

In Danio rerio (Zebrafish), this protein is Tetratricopeptide repeat protein 33 (ttc33).